The following is a 428-amino-acid chain: Serine--tRNA ligase (428 aa).

235 to 237 contacts L-serine; sequence TAE. Position 266-268 (266-268) interacts with ATP; sequence RSE. L-serine is bound at residue Glu-289. 353–356 lines the ATP pocket; it reads EISS. Ser-389 contributes to the L-serine binding site.

This sequence belongs to the class-II aminoacyl-tRNA synthetase family. Type-1 seryl-tRNA synthetase subfamily. In terms of assembly, homodimer. The tRNA molecule binds across the dimer.

Its subcellular location is the cytoplasm. The catalysed reaction is tRNA(Ser) + L-serine + ATP = L-seryl-tRNA(Ser) + AMP + diphosphate + H(+). It carries out the reaction tRNA(Sec) + L-serine + ATP = L-seryl-tRNA(Sec) + AMP + diphosphate + H(+). The protein operates within aminoacyl-tRNA biosynthesis; selenocysteinyl-tRNA(Sec) biosynthesis; L-seryl-tRNA(Sec) from L-serine and tRNA(Sec): step 1/1. In terms of biological role, catalyzes the attachment of serine to tRNA(Ser). Is also able to aminoacylate tRNA(Sec) with serine, to form the misacylated tRNA L-seryl-tRNA(Sec), which will be further converted into selenocysteinyl-tRNA(Sec). The protein is Serine--tRNA ligase of Shewanella halifaxensis (strain HAW-EB4).